The primary structure comprises 633 residues: UvrABC system protein C (633 aa).

The GIY-YIG domain maps to Pro37–Ile115. A UVR domain is found at Asn225–Val260.

The protein belongs to the UvrC family. Interacts with UvrB in an incision complex.

It localises to the cytoplasm. In terms of biological role, the UvrABC repair system catalyzes the recognition and processing of DNA lesions. UvrC both incises the 5' and 3' sides of the lesion. The N-terminal half is responsible for the 3' incision and the C-terminal half is responsible for the 5' incision. In Maricaulis maris (strain MCS10) (Caulobacter maris), this protein is UvrABC system protein C.